We begin with the raw amino-acid sequence, 215 residues long: Imidazole glycerol phosphate synthase subunit HisH (215 aa).

The 209-residue stretch at 7-215 folds into the Glutamine amidotransferase type-1 domain; sequence TIAVIDYGMG…LLKNFVEWQP (209 aa). Cysteine 86 (nucleophile) is an active-site residue. Active-site residues include histidine 195 and glutamate 197.

In terms of assembly, heterodimer of HisH and HisF.

The protein localises to the cytoplasm. It catalyses the reaction 5-[(5-phospho-1-deoxy-D-ribulos-1-ylimino)methylamino]-1-(5-phospho-beta-D-ribosyl)imidazole-4-carboxamide + L-glutamine = D-erythro-1-(imidazol-4-yl)glycerol 3-phosphate + 5-amino-1-(5-phospho-beta-D-ribosyl)imidazole-4-carboxamide + L-glutamate + H(+). The catalysed reaction is L-glutamine + H2O = L-glutamate + NH4(+). The protein operates within amino-acid biosynthesis; L-histidine biosynthesis; L-histidine from 5-phospho-alpha-D-ribose 1-diphosphate: step 5/9. Functionally, IGPS catalyzes the conversion of PRFAR and glutamine to IGP, AICAR and glutamate. The HisH subunit catalyzes the hydrolysis of glutamine to glutamate and ammonia as part of the synthesis of IGP and AICAR. The resulting ammonia molecule is channeled to the active site of HisF. This Dechloromonas aromatica (strain RCB) protein is Imidazole glycerol phosphate synthase subunit HisH.